A 396-amino-acid polypeptide reads, in one-letter code: Exodeoxyribonuclease 7 large subunit (396 aa).

Belongs to the XseA family. Heterooligomer composed of large and small subunits.

The protein localises to the cytoplasm. It carries out the reaction Exonucleolytic cleavage in either 5'- to 3'- or 3'- to 5'-direction to yield nucleoside 5'-phosphates.. Functionally, bidirectionally degrades single-stranded DNA into large acid-insoluble oligonucleotides, which are then degraded further into small acid-soluble oligonucleotides. In Clostridium tetani (strain Massachusetts / E88), this protein is Exodeoxyribonuclease 7 large subunit.